We begin with the raw amino-acid sequence, 1800 residues long: U3 small nucleolar RNA-associated protein 10 (1800 aa).

HEAT repeat units lie at residues 426–467 and 581–619; these read FTQS…TTPA and DVDL…LYKK. The next 2 membrane-spanning stretches (helical) occupy residues 944–964 and 1000–1020; these read IQSG…AIVN and ALLL…HSVM. 4 HEAT repeats span residues 1043–1081, 1250–1288, 1294–1333, and 1755–1793; these read DQTI…AFEH, TLSL…QNPE, QHRM…KYGR, and LALL…VLGE.

Belongs to the HEATR1/UTP10 family. As to quaternary structure, component of the ribosomal small subunit (SSU) processome.

Its subcellular location is the nucleus. It is found in the nucleolus. The protein resides in the membrane. In terms of biological role, involved in nucleolar processing of pre-18S ribosomal RNA. Involved in ribosome biosynthesis. The chain is U3 small nucleolar RNA-associated protein 10 from Aspergillus niger (strain ATCC MYA-4892 / CBS 513.88 / FGSC A1513).